Reading from the N-terminus, the 62-residue chain is Photosystem II reaction center X protein (62 aa).

Residues 26-46 (IASFFAAALLIVIPAAAFLIF) traverse the membrane as a helical segment.

This sequence belongs to the PsbX family. Type 2 subfamily. As to quaternary structure, PSII consists of a core antenna complex that captures photons, and an electron transfer chain that converts photonic excitation into a charge separation. PSII forms dimeric complexes.

It is found in the cellular thylakoid membrane. Involved in the binding and/or turnover of quinones at the Q(B) site of Photosystem II. The sequence is that of Photosystem II reaction center X protein from Prochlorococcus marinus subsp. pastoris (strain CCMP1986 / NIES-2087 / MED4).